Consider the following 59-residue polypeptide: Large ribosomal subunit protein uL30 (59 aa).

This sequence belongs to the universal ribosomal protein uL30 family. As to quaternary structure, part of the 50S ribosomal subunit.

This Listeria welshimeri serovar 6b (strain ATCC 35897 / DSM 20650 / CCUG 15529 / CIP 8149 / NCTC 11857 / SLCC 5334 / V8) protein is Large ribosomal subunit protein uL30.